A 422-amino-acid chain; its full sequence is 3-phosphoshikimate 1-carboxyvinyltransferase (422 aa).

3 residues coordinate 3-phosphoshikimate: K24, S25, and R29. Residue K24 participates in phosphoenolpyruvate binding. Residues G93 and R121 each coordinate phosphoenolpyruvate. 3-phosphoshikimate contacts are provided by S164, S165, Q166, E308, and H335. Q166 is a binding site for phosphoenolpyruvate. Catalysis depends on E308, which acts as the Proton acceptor. Positions 339, 380, and 405 each coordinate phosphoenolpyruvate.

It belongs to the EPSP synthase family. As to quaternary structure, monomer.

It localises to the cytoplasm. It carries out the reaction 3-phosphoshikimate + phosphoenolpyruvate = 5-O-(1-carboxyvinyl)-3-phosphoshikimate + phosphate. The protein operates within metabolic intermediate biosynthesis; chorismate biosynthesis; chorismate from D-erythrose 4-phosphate and phosphoenolpyruvate: step 6/7. Catalyzes the transfer of the enolpyruvyl moiety of phosphoenolpyruvate (PEP) to the 5-hydroxyl of shikimate-3-phosphate (S3P) to produce enolpyruvyl shikimate-3-phosphate and inorganic phosphate. In Saccharopolyspora erythraea (strain ATCC 11635 / DSM 40517 / JCM 4748 / NBRC 13426 / NCIMB 8594 / NRRL 2338), this protein is 3-phosphoshikimate 1-carboxyvinyltransferase.